Reading from the N-terminus, the 89-residue chain is Large ribosomal subunit protein eL34 (89 aa).

Residues 1–22 form a disordered region; that stretch reads MPAPRYKSGSSKKVYRKAPGNS.

It belongs to the eukaryotic ribosomal protein eL34 family.

The sequence is that of Large ribosomal subunit protein eL34 from Methanococcus maripaludis (strain DSM 14266 / JCM 13030 / NBRC 101832 / S2 / LL).